Reading from the N-terminus, the 94-residue chain is MRHVKRKSLVLGWKYIISHKIISGYIWLYRNCTTNIYTVCKFLRCGYICEELCNGRSTCDDRTFAHRTFVFMGVYLQLIHHISRFRTNIAFITQ.

This is an uncharacterized protein from Saccharomyces cerevisiae (strain ATCC 204508 / S288c) (Baker's yeast).